The sequence spans 333 residues: DNA repair and recombination protein RadA (333 aa).

Residue 127 to 134 (GEFGSGKT) participates in ATP binding.

Belongs to the eukaryotic RecA-like protein family.

Functionally, involved in DNA repair and in homologous recombination. Binds and assemble on single-stranded DNA to form a nucleoprotein filament. Hydrolyzes ATP in a ssDNA-dependent manner and promotes DNA strand exchange between homologous DNA molecules. This chain is DNA repair and recombination protein RadA, found in Pyrobaculum aerophilum (strain ATCC 51768 / DSM 7523 / JCM 9630 / CIP 104966 / NBRC 100827 / IM2).